The primary structure comprises 431 residues: Enolase (431 aa).

Residue Gln164 coordinates (2R)-2-phosphoglycerate. Glu206 functions as the Proton donor in the catalytic mechanism. Mg(2+)-binding residues include Asp243, Glu286, and Asp313. (2R)-2-phosphoglycerate-binding residues include Lys338, Arg367, Ser368, and Lys389. Catalysis depends on Lys338, which acts as the Proton acceptor.

This sequence belongs to the enolase family. Mg(2+) is required as a cofactor.

It localises to the cytoplasm. It is found in the secreted. Its subcellular location is the cell surface. It carries out the reaction (2R)-2-phosphoglycerate = phosphoenolpyruvate + H2O. It participates in carbohydrate degradation; glycolysis; pyruvate from D-glyceraldehyde 3-phosphate: step 4/5. Catalyzes the reversible conversion of 2-phosphoglycerate (2-PG) into phosphoenolpyruvate (PEP). It is essential for the degradation of carbohydrates via glycolysis. The polypeptide is Enolase (Chloroflexus aggregans (strain MD-66 / DSM 9485)).